Consider the following 115-residue polypeptide: DNA-directed RNA polymerase subunit omega (115 aa).

It belongs to the RNA polymerase subunit omega family. The RNAP catalytic core consists of 2 alpha, 1 beta, 1 beta' and 1 omega subunit. When a sigma factor is associated with the core the holoenzyme is formed, which can initiate transcription.

The catalysed reaction is RNA(n) + a ribonucleoside 5'-triphosphate = RNA(n+1) + diphosphate. Functionally, promotes RNA polymerase assembly. Latches the N- and C-terminal regions of the beta' subunit thereby facilitating its interaction with the beta and alpha subunits. The protein is DNA-directed RNA polymerase subunit omega of Cutibacterium acnes (strain DSM 16379 / KPA171202) (Propionibacterium acnes).